The following is a 50-amino-acid chain: Peptide encoded by miPEP319a (50 aa).

Regulatory peptide encoded by the primary transcript (pri-miR319a) of the microRNA miR319a that enhances the accumulation of its corresponding mature miRNA. Acts probably as a transcriptional activator of its corresponding pri-miRNA. The protein is Peptide encoded by miPEP319a of Arabidopsis thaliana (Mouse-ear cress).